The sequence spans 518 residues: ATPase expression protein 2, mitochondrial (518 aa).

Residues 1–15 (MLKKSRVLGKIPIPY) constitute a mitochondrion transit peptide.

It belongs to the AEP2 family. Binds to the 5'UTR of the OLI1 mRNA.

The protein localises to the mitochondrion. Required for translation of the mitochondrial OLI1 transcript coding for the mitochondrial ATP synthase subunit 9. This Kluyveromyces lactis (strain ATCC 8585 / CBS 2359 / DSM 70799 / NBRC 1267 / NRRL Y-1140 / WM37) (Yeast) protein is ATPase expression protein 2, mitochondrial (AEP2).